The following is a 458-amino-acid chain: Argininosuccinate lyase (458 aa).

The protein belongs to the lyase 1 family. Argininosuccinate lyase subfamily.

The protein resides in the cytoplasm. The catalysed reaction is 2-(N(omega)-L-arginino)succinate = fumarate + L-arginine. Its pathway is amino-acid biosynthesis; L-arginine biosynthesis; L-arginine from L-ornithine and carbamoyl phosphate: step 3/3. This is Argininosuccinate lyase from Salmonella agona (strain SL483).